Here is a 438-residue protein sequence, read N- to C-terminus: UDP-N-acetylmuramoylalanine--D-glutamate ligase (438 aa).

Residue 112 to 118 (GSNGKST) participates in ATP binding.

It belongs to the MurCDEF family.

The protein resides in the cytoplasm. It catalyses the reaction UDP-N-acetyl-alpha-D-muramoyl-L-alanine + D-glutamate + ATP = UDP-N-acetyl-alpha-D-muramoyl-L-alanyl-D-glutamate + ADP + phosphate + H(+). The protein operates within cell wall biogenesis; peptidoglycan biosynthesis. In terms of biological role, cell wall formation. Catalyzes the addition of glutamate to the nucleotide precursor UDP-N-acetylmuramoyl-L-alanine (UMA). The protein is UDP-N-acetylmuramoylalanine--D-glutamate ligase of Salmonella paratyphi A (strain ATCC 9150 / SARB42).